Consider the following 71-residue polypeptide: Protein DP71L (71 aa).

Important for host CHOP inhibition regions lie at residues 16 to 18 and 57 to 61; these read VRF and LSTVL.

Belongs to the asfivirus DP71L family. As to quaternary structure, interacts (via C-terminus) with host PPP1CB.

Its function is as follows. Interacts with the host phosphatase PP1 catalytic subunit (PPP1CB) and recruits it to dephosphorylate EIF2S1/eIF2alpha and therefore restores the host translation that has been shut-down by the host. Also inhibits the EIF2S1/eIF2alpha-ATF4-DDIT3/CHOP pathway. In African swine fever virus (strain Badajoz 1971 Vero-adapted) (Ba71V), this protein is Protein DP71L.